Here is a 337-residue protein sequence, read N- to C-terminus: Ketol-acid reductoisomerase (NADP(+)) (337 aa).

Residues 3–183 form the KARI N-terminal Rossmann domain; sequence IELFYDADAD…GGGRAGIIPT (181 aa). NADP(+) is bound by residues 26–29, Arg49, Ser52, Ser54, and 84–87; these read YGSQ and DTSQ. His109 is a catalytic residue. Gly135 is an NADP(+) binding site. In terms of domain architecture, KARI C-terminal knotted spans 184 to 329; it reads TFEAETVTDL…AKLRDLMSWV (146 aa). Positions 192, 196, 228, and 232 each coordinate Mg(2+). Ser253 contributes to the substrate binding site.

This sequence belongs to the ketol-acid reductoisomerase family. The cofactor is Mg(2+).

The catalysed reaction is (2R)-2,3-dihydroxy-3-methylbutanoate + NADP(+) = (2S)-2-acetolactate + NADPH + H(+). The enzyme catalyses (2R,3R)-2,3-dihydroxy-3-methylpentanoate + NADP(+) = (S)-2-ethyl-2-hydroxy-3-oxobutanoate + NADPH + H(+). It participates in amino-acid biosynthesis; L-isoleucine biosynthesis; L-isoleucine from 2-oxobutanoate: step 2/4. It functions in the pathway amino-acid biosynthesis; L-valine biosynthesis; L-valine from pyruvate: step 2/4. Its function is as follows. Involved in the biosynthesis of branched-chain amino acids (BCAA). Catalyzes an alkyl-migration followed by a ketol-acid reduction of (S)-2-acetolactate (S2AL) to yield (R)-2,3-dihydroxy-isovalerate. In the isomerase reaction, S2AL is rearranged via a Mg-dependent methyl migration to produce 3-hydroxy-3-methyl-2-ketobutyrate (HMKB). In the reductase reaction, this 2-ketoacid undergoes a metal-dependent reduction by NADPH to yield (R)-2,3-dihydroxy-isovalerate. In Corynebacterium efficiens (strain DSM 44549 / YS-314 / AJ 12310 / JCM 11189 / NBRC 100395), this protein is Ketol-acid reductoisomerase (NADP(+)).